The sequence spans 180 residues: ATP-dependent protease subunit HslV (180 aa).

Thr-5 is a catalytic residue. Residues Gly-161, Cys-164, and Thr-167 each contribute to the Na(+) site.

Belongs to the peptidase T1B family. HslV subfamily. A double ring-shaped homohexamer of HslV is capped on each side by a ring-shaped HslU homohexamer. The assembly of the HslU/HslV complex is dependent on binding of ATP.

Its subcellular location is the cytoplasm. It catalyses the reaction ATP-dependent cleavage of peptide bonds with broad specificity.. Allosterically activated by HslU binding. In terms of biological role, protease subunit of a proteasome-like degradation complex believed to be a general protein degrading machinery. The chain is ATP-dependent protease subunit HslV from Campylobacter lari (strain RM2100 / D67 / ATCC BAA-1060).